We begin with the raw amino-acid sequence, 1039 residues long: MWLRQSSGGGVASAGHGGPLRQRPIDAATDCDPRACYDSFCKHWQQAFEIIQHSAPPSHDDVLGVVSHLDYMVTLLLVELHHCNKVSLPAAEASGPPAAPCLEFLLSENLLDKLYEWACTTGRYANAVRLEQLKLYELLVSHSRHQLLCHEPFLRPLLKILASSQGEIFPPDLEKRLVILLNQLCVVLMQNVHLLDLFFFSAQTQVQEQILNGNVAPPKSGTTTNFIIFSLLIPYVHREGSLGHQARDALLLCMALSQKNSNIGTYIAQYSSICPLLVTGLGGLYSRLPNSIEISSIDWHRITPDDVTEIPELTLFMNALEFCNAVVQVAHEMIKQQLLDFMYQGFIVPVLGPAILQTLKGKHFQTNIDSQISAMSYLDLILRSITEPGLLRAFVRFLLDTEKFDGERILDALVERLNSPDANLCMVTMALFDTLLGLHCEDLMLELLLKFMLPGKHVPISHRHKINKIDPYLNSSEFFLDLSPDVMKRARDLARPKSVHEPVVSDLTPLPSLPSPVMSKTIGANWNYYGVHTGDSLYANIQAYLFEAHWRIAQCQRDCLKWANSYRYQKWPRHGQGRVHAHALELARQFFSEFGGGPIAANETGEKQLDSLQSIGESSGYESFKWRPADEESEATDTTLATTASEADLDHNSSSLSSVLGASGKREAWRTSNNNRNELILTDLDFSEDLFAQGTVSLGPFLNAIWGKLQTFTSNSLYVNLHLTGLITRLAWYPLPLIHSLLLRSDIAITSDTPSFHQVLRILKQQIDAELPVTEDSLEIIDVARSSLIDREFRLANARKGNEGSPMHHSQQQQMVTNSYATLSAATPVQATPTSAYDPFKRSDKKRRSISKSITSMFSRKSASTSTTPPNGSSASSGLSQIYAFFTGAASNLVGNNASNDGRGISQAQTSAGTCETSLSTQPQAGASRTGATATSAAASGSNSSIAGSTLTLSAQSNTTTHSASTLHGLDGGPSTGGFNSEPASLDSVASMGIIASTSGTERSRDLALCAVLMDEWLKELAAIAQEQSVVLVTEQGSL.

Phosphoserine occurs at positions 498 and 805. Disordered stretches follow at residues 831-877, 904-945, and 957-984; these read ATPT…SASS, GISQ…SNSS, and SNTT…SEPA. Composition is skewed to polar residues over residues 855–877 and 904–924; these read TSMF…SASS and GISQ…TQPQ. The segment covering 925-945 has biased composition (low complexity); that stretch reads AGASRTGATATSAAASGSNSS. The segment covering 957–966 has biased composition (polar residues); sequence SNTTTHSAST.

It belongs to the FHIP family.

This chain is FHIP family protein GG24907, found in Drosophila erecta (Fruit fly).